Consider the following 340-residue polypeptide: Anthranilate phosphoribosyltransferase (340 aa).

5-phospho-alpha-D-ribose 1-diphosphate-binding positions include Gly-79, 82-83 (GD), Thr-87, 89-92 (NIST), 107-115 (KHGNRAVTG), and Ser-119. Position 79 (Gly-79) interacts with anthranilate. A Mg(2+)-binding site is contributed by Ser-91. Asn-110 is a binding site for anthranilate. Anthranilate is bound at residue Arg-165. Mg(2+) is bound by residues Asp-224 and Glu-225.

The protein belongs to the anthranilate phosphoribosyltransferase family. In terms of assembly, homodimer. It depends on Mg(2+) as a cofactor.

The catalysed reaction is N-(5-phospho-beta-D-ribosyl)anthranilate + diphosphate = 5-phospho-alpha-D-ribose 1-diphosphate + anthranilate. The protein operates within amino-acid biosynthesis; L-tryptophan biosynthesis; L-tryptophan from chorismate: step 2/5. Catalyzes the transfer of the phosphoribosyl group of 5-phosphorylribose-1-pyrophosphate (PRPP) to anthranilate to yield N-(5'-phosphoribosyl)-anthranilate (PRA). The sequence is that of Anthranilate phosphoribosyltransferase from Syntrophomonas wolfei subsp. wolfei (strain DSM 2245B / Goettingen).